The sequence spans 364 residues: Anionic peroxidase (364 aa).

An N-terminal signal peptide occupies residues 1 to 20 (MASFMKQLSLVLSFIALALA). The propeptide occupies 21-66 (GCAVYQNTQTAMKDQLKVTPTWLDNTLKSTNLLSLGLGKPSGGKLG). The Proton acceptor role is filled by His99. Residues Asp100, Val103, Gly105, and Asp107 each coordinate Ca(2+). The cysteines at positions 101 and 106 are disulfide-linked. Residues Asn113, Asn188, Asn202, and Asn216 are each glycosylated (N-linked (GlcNAc...) asparagine). Cystine bridges form between Cys155/Cys343 and Cys234/Cys255. His227 provides a ligand contact to heme b. Thr228 serves as a coordination point for Ca(2+). 2 N-linked (GlcNAc...) asparagine glycosylation sites follow: Asn254 and Asn260. Asp268, Thr270, and Asp275 together coordinate Ca(2+). Residue Asn299 is glycosylated (N-linked (GlcNAc...) asparagine).

This sequence belongs to the peroxidase family. Classical plant (class III) peroxidase subfamily. It depends on Ca(2+) as a cofactor. Heme b serves as cofactor. Highly expressed in suspension cultured cells and calli. Weak expression also found in the stems of intact plants. No expression in leaf, tuberous root and non-tuberous root.

The protein localises to the secreted. The catalysed reaction is 2 a phenolic donor + H2O2 = 2 a phenolic radical donor + 2 H2O. Its function is as follows. Removal of H(2)O(2), oxidation of toxic reductants, biosynthesis and degradation of lignin, suberization, auxin catabolism, response to environmental stresses such as wounding, pathogen attack and oxidative stress. These functions might be dependent on each isozyme/isoform in each plant tissue. Functionally, may contribute to protection against cold-induced oxidative stress. The chain is Anionic peroxidase from Ipomoea batatas (Sweet potato).